Consider the following 147-residue polypeptide: Small ribosomal subunit protein uS12 (147 aa).

It belongs to the universal ribosomal protein uS12 family. As to quaternary structure, part of the 30S ribosomal subunit.

Functionally, with S4 and S5 plays an important role in translational accuracy. Located at the interface of the 30S and 50S subunits. In Methanococcus maripaludis (strain C7 / ATCC BAA-1331), this protein is Small ribosomal subunit protein uS12.